The sequence spans 151 residues: U1 small nuclear ribonucleoprotein C (151 aa).

Residues 4 to 36 (FYCEYCSIYLTHSSPAGRKQHSQGRKHISAKVE) form a Matrin-type zinc finger.

The protein belongs to the U1 small nuclear ribonucleoprotein C family. U1 snRNP is composed of the 7 core Sm proteins B/B', D1, D2, D3, E, F and G that assemble in a heptameric protein ring on the Sm site of the small nuclear RNA to form the core snRNP, and at least 3 U1 snRNP-specific proteins U1-70K, U1-A and U1-C. U1-C interacts with U1 snRNA and the 5' splice-site region of the pre-mRNA.

It is found in the nucleus. Its function is as follows. Component of the spliceosomal U1 snRNP, which is essential for recognition of the pre-mRNA 5' splice-site and the subsequent assembly of the spliceosome. U1-C is directly involved in initial 5' splice-site recognition for both constitutive and regulated alternative splicing. The interaction with the 5' splice-site seems to precede base-pairing between the pre-mRNA and the U1 snRNA. Stimulates commitment or early (E) complex formation by stabilizing the base pairing of the 5' end of the U1 snRNA and the 5' splice-site region. The polypeptide is U1 small nuclear ribonucleoprotein C (Theileria annulata).